A 937-amino-acid polypeptide reads, in one-letter code: Bifunctional glutamine synthetase adenylyltransferase/adenylyl-removing enzyme (937 aa).

Residues 1–436 form an adenylyl removase region; that stretch reads MSQPIPSASP…AAEFAELLAP (436 aa). The tract at residues 443-937 is adenylyl transferase; the sequence is PDTLADYWRA…QLRFQPGKGA (495 aa).

Belongs to the GlnE family. Mg(2+) serves as cofactor.

The enzyme catalyses [glutamine synthetase]-O(4)-(5'-adenylyl)-L-tyrosine + phosphate = [glutamine synthetase]-L-tyrosine + ADP. The catalysed reaction is [glutamine synthetase]-L-tyrosine + ATP = [glutamine synthetase]-O(4)-(5'-adenylyl)-L-tyrosine + diphosphate. Its function is as follows. Involved in the regulation of glutamine synthetase GlnA, a key enzyme in the process to assimilate ammonia. When cellular nitrogen levels are high, the C-terminal adenylyl transferase (AT) inactivates GlnA by covalent transfer of an adenylyl group from ATP to specific tyrosine residue of GlnA, thus reducing its activity. Conversely, when nitrogen levels are low, the N-terminal adenylyl removase (AR) activates GlnA by removing the adenylyl group by phosphorolysis, increasing its activity. The regulatory region of GlnE binds the signal transduction protein PII (GlnB) which indicates the nitrogen status of the cell. This Xanthomonas campestris pv. campestris (strain B100) protein is Bifunctional glutamine synthetase adenylyltransferase/adenylyl-removing enzyme.